The following is a 154-amino-acid chain: 3-dehydroquinate dehydratase (154 aa).

The Proton acceptor role is filled by Tyr-26. Residues Asn-77, His-83, and Asp-90 each contribute to the substrate site. His-103 functions as the Proton donor in the catalytic mechanism. Residues 104–105 (IS) and Arg-114 each bind substrate.

Belongs to the type-II 3-dehydroquinase family. Homododecamer.

The catalysed reaction is 3-dehydroquinate = 3-dehydroshikimate + H2O. Its pathway is metabolic intermediate biosynthesis; chorismate biosynthesis; chorismate from D-erythrose 4-phosphate and phosphoenolpyruvate: step 3/7. Catalyzes a trans-dehydration via an enolate intermediate. The chain is 3-dehydroquinate dehydratase from Buchnera aphidicola subsp. Baizongia pistaciae (strain Bp).